We begin with the raw amino-acid sequence, 146 residues long: Glycosylation-dependent cell adhesion molecule 1 (146 aa).

Residues 1–19 (MKFFTVLLFASLAATSLAA) form the signal peptide. Residues 25-112 (DELHLRTQPT…SAATSEGKLT (88 aa)) are disordered. The span at 48-60 (ISKESTSSKDLSK) shows a compositional bias: basic and acidic residues. Phosphoserine occurs at positions 54, 59, and 71. Over residues 74 to 106 (NVGTESTKPQSQEAQDGLRSGSSQQEETTSAAT) the composition is skewed to polar residues.

The protein belongs to the PP3/GlyCAM-1 family. In terms of processing, extensively O-glycosylated. As to expression, lymph nodes. Associated with the lumenal surface of the high endothelial venules of peripheral lymph nodes.

Its subcellular location is the cell membrane. Its function is as follows. Adhesion molecule that accomplishes cell binding by presenting carbohydrate(s) to the lectin domain of L-selectin. The polypeptide is Glycosylation-dependent cell adhesion molecule 1 (Glycam1) (Rattus norvegicus (Rat)).